We begin with the raw amino-acid sequence, 427 residues long: Histidinol dehydrogenase (427 aa).

Substrate is bound by residues Ser232, Gln254, and His257. Residues Gln254 and His257 each contribute to the Zn(2+) site. Active-site proton acceptor residues include Glu322 and His323. His323, Asp356, Glu410, and His415 together coordinate substrate. Residue Asp356 coordinates Zn(2+). Residue His415 participates in Zn(2+) binding.

Belongs to the histidinol dehydrogenase family. Zn(2+) is required as a cofactor.

It carries out the reaction L-histidinol + 2 NAD(+) + H2O = L-histidine + 2 NADH + 3 H(+). The protein operates within amino-acid biosynthesis; L-histidine biosynthesis; L-histidine from 5-phospho-alpha-D-ribose 1-diphosphate: step 9/9. In terms of biological role, catalyzes the sequential NAD-dependent oxidations of L-histidinol to L-histidinaldehyde and then to L-histidine. This chain is Histidinol dehydrogenase, found in Listeria monocytogenes serovar 1/2a (strain ATCC BAA-679 / EGD-e).